The following is a 613-amino-acid chain: Dihydroxy-acid dehydratase (613 aa).

Residue aspartate 81 coordinates Mg(2+). Residue cysteine 122 participates in [2Fe-2S] cluster binding. Mg(2+)-binding residues include aspartate 123 and lysine 124. Lysine 124 carries the N6-carboxylysine modification. Residue cysteine 193 participates in [2Fe-2S] cluster binding. Position 489 (glutamate 489) interacts with Mg(2+). Serine 515 functions as the Proton acceptor in the catalytic mechanism.

It belongs to the IlvD/Edd family. Homodimer. The cofactor is [2Fe-2S] cluster. Requires Mg(2+) as cofactor.

The catalysed reaction is (2R)-2,3-dihydroxy-3-methylbutanoate = 3-methyl-2-oxobutanoate + H2O. The enzyme catalyses (2R,3R)-2,3-dihydroxy-3-methylpentanoate = (S)-3-methyl-2-oxopentanoate + H2O. The protein operates within amino-acid biosynthesis; L-isoleucine biosynthesis; L-isoleucine from 2-oxobutanoate: step 3/4. Its pathway is amino-acid biosynthesis; L-valine biosynthesis; L-valine from pyruvate: step 3/4. Its function is as follows. Functions in the biosynthesis of branched-chain amino acids. Catalyzes the dehydration of (2R,3R)-2,3-dihydroxy-3-methylpentanoate (2,3-dihydroxy-3-methylvalerate) into 2-oxo-3-methylpentanoate (2-oxo-3-methylvalerate) and of (2R)-2,3-dihydroxy-3-methylbutanoate (2,3-dihydroxyisovalerate) into 2-oxo-3-methylbutanoate (2-oxoisovalerate), the penultimate precursor to L-isoleucine and L-valine, respectively. This is Dihydroxy-acid dehydratase from Pseudomonas fluorescens (strain ATCC BAA-477 / NRRL B-23932 / Pf-5).